We begin with the raw amino-acid sequence, 212 residues long: Putative inactive 6-phospho-alpha-glucosidase (212 aa).

4 to 70 provides a ligand contact to NAD(+); sequence FSVVVAGGGS…PDIAFSYTTD (67 aa). Residues cysteine 169 and histidine 200 each contribute to the Mn(2+) site.

This sequence belongs to the glycosyl hydrolase 4 family.

The protein is Putative inactive 6-phospho-alpha-glucosidase of Escherichia coli (strain K12).